Consider the following 666-residue polypeptide: UvrABC system protein B (666 aa).

The Helicase ATP-binding domain occupies 25-412 (EQVQAGAPYQ…EEQIVEQVIR (388 aa)). 38–45 (GATGTGKT) contacts ATP. Positions 91 to 114 (YYDYYQPEAYIPVTDTYIAKTASI) match the Beta-hairpin motif. The 167-residue stretch at 429 to 595 (QVDDLLAEIQ…PIIKRSSNAI (167 aa)) folds into the Helicase C-terminal domain. One can recognise a UVR domain in the interval 626–661 (PNLITQLEAQMKEAAKNLEFEEAAQYRDRIKKLRER).

The protein belongs to the UvrB family. Forms a heterotetramer with UvrA during the search for lesions. Interacts with UvrC in an incision complex.

Its subcellular location is the cytoplasm. The UvrABC repair system catalyzes the recognition and processing of DNA lesions. A damage recognition complex composed of 2 UvrA and 2 UvrB subunits scans DNA for abnormalities. Upon binding of the UvrA(2)B(2) complex to a putative damaged site, the DNA wraps around one UvrB monomer. DNA wrap is dependent on ATP binding by UvrB and probably causes local melting of the DNA helix, facilitating insertion of UvrB beta-hairpin between the DNA strands. Then UvrB probes one DNA strand for the presence of a lesion. If a lesion is found the UvrA subunits dissociate and the UvrB-DNA preincision complex is formed. This complex is subsequently bound by UvrC and the second UvrB is released. If no lesion is found, the DNA wraps around the other UvrB subunit that will check the other stand for damage. This is UvrABC system protein B from Synechococcus sp. (strain ATCC 27144 / PCC 6301 / SAUG 1402/1) (Anacystis nidulans).